We begin with the raw amino-acid sequence, 557 residues long: Probable protein kinase UbiB (557 aa).

In terms of domain architecture, Protein kinase spans 121–509; sequence AFDTTPLASA…RKLQTRVVTA (389 aa). ATP is bound by residues 127–135 and Lys154; that span reads LASASIAQV. Residue Asp289 is the Proton acceptor of the active site. Helical transmembrane passes span 506-526 and 535-555; these read VVTAITGSGLLVVAAVLYGLH and VPVWSWISGGAGSAALLIAWL.

Belongs to the ABC1 family. UbiB subfamily.

Its subcellular location is the cell inner membrane. The protein operates within cofactor biosynthesis; ubiquinone biosynthesis [regulation]. In terms of biological role, is probably a protein kinase regulator of UbiI activity which is involved in aerobic coenzyme Q (ubiquinone) biosynthesis. In Xanthomonas campestris pv. campestris (strain B100), this protein is Probable protein kinase UbiB.